The primary structure comprises 91 residues: Putative antitoxin YutD (91 aa).

A disulfide bond links C77 and C81.

As to quaternary structure, homodimer, probably forms a complex with cognate toxin YutE.

Probable antitoxin component of a putative type VII toxin-antitoxin (TA) system. Probably neutralizes cognate toxin YutE. In Bacillus subtilis (strain 168), this protein is Putative antitoxin YutD (yutD).